The primary structure comprises 166 residues: Interferon gamma (166 aa).

The signal sequence occupies residues 1 to 23 (MKYTSYILAFQLCIILGSSSCYS). At glutamine 24 the chain carries Pyrrolidone carboxylic acid. N-linked (GlcNAc...) asparagine glycosylation is found at asparagine 39, asparagine 44, and asparagine 106.

Belongs to the type II (or gamma) interferon family. In terms of assembly, homodimer. In terms of tissue distribution, released primarily from activated T lymphocytes.

The protein localises to the secreted. In terms of biological role, produced by lymphocytes activated by specific antigens or mitogens. IFN-gamma, in addition to having antiviral activity, has important immunoregulatory functions. It is a potent activator of macrophages, it has antiproliferative effects on transformed cells and it can potentiate the antiviral and antitumor effects of the type I interferons. The sequence is that of Interferon gamma (IFNG) from Marmota monax (Woodchuck).